The sequence spans 526 residues: Glutamate--cysteine ligase (526 aa).

It belongs to the glutamate--cysteine ligase type 1 family. Type 1 subfamily.

The enzyme catalyses L-cysteine + L-glutamate + ATP = gamma-L-glutamyl-L-cysteine + ADP + phosphate + H(+). It participates in sulfur metabolism; glutathione biosynthesis; glutathione from L-cysteine and L-glutamate: step 1/2. The sequence is that of Glutamate--cysteine ligase from Shewanella amazonensis (strain ATCC BAA-1098 / SB2B).